Reading from the N-terminus, the 61-residue chain is MTQSCTLTLVLVVAVLAALATAQLNFSAGWGRRYADPNADPMAFLYRLIQIEARKLAGCSD.

Residues 1-22 form the signal peptide; sequence MTQSCTLTLVLVVAVLAALATA. Gln-23 carries the post-translational modification Pyrrolidone carboxylic acid. A Tryptophan amide modification is found at Trp-30.

This sequence belongs to the AKH/HRTH/RPCH family. Adipokinetic hormone precursor-related peptide (APRP) can form three type of disulfide-bond dimers: p1 (alpha-alpha), p2 (alpha-beta), and p3 (beta-beta).

The protein localises to the secreted. In terms of biological role, this hormone, released from cells in the corpora cardiaca, causes release of diglycerides from the fat body and stimulation of muscles to use these diglycerides as an energy source during energy-demanding processes. The protein is Adipokinetic prohormone type 2 of Locusta migratoria (Migratory locust).